The primary structure comprises 145 residues: Large ribosomal subunit protein uL13 (145 aa).

This sequence belongs to the universal ribosomal protein uL13 family. In terms of assembly, part of the 50S ribosomal subunit.

This protein is one of the early assembly proteins of the 50S ribosomal subunit, although it is not seen to bind rRNA by itself. It is important during the early stages of 50S assembly. This chain is Large ribosomal subunit protein uL13, found in Geobacillus thermodenitrificans (strain NG80-2).